The following is a 90-amino-acid chain: Iron oxidase (90 aa).

The tat-type signal signal peptide spans 1–37 (MSEKDKMITRRDALRNIAVVVGSVATTTMMGVGVADA). Residues Cys-57, Cys-60, Cys-69, and Cys-82 each contribute to the [4Fe-4S] cluster site.

It belongs to the high-potential iron-sulfur protein (HiPIP) family. Homomultimer. Post-translationally, predicted to be exported by the Tat system. The position of the signal peptide cleavage has been experimentally proven.

The protein resides in the periplasm. Its function is as follows. Catalyzes the oxidation of Fe(2+) to Fe(3+) coupled to cytochrome c552 reduction. The sequence is that of Iron oxidase (iro) from Acidithiobacillus ferrooxidans (Thiobacillus ferrooxidans).